We begin with the raw amino-acid sequence, 584 residues long: Ras-specific guanine nucleotide-releasing factor RalGPS1 (584 aa).

A compositionally biased stretch (polar residues) spans 1-13 (MDLMNGQSSSVNI). 3 disordered regions span residues 1 to 29 (MDLM…SLSD), 285 to 338 (IEPG…IPHG), and 380 to 407 (HVPS…SELS). The span at 14–26 (AATASEKSSSSES) shows a compositional bias: low complexity. The Ras-GEF domain occupies 50-288 (TPEEYAGQIT…YKLSLKIEPG (239 aa)). A PXXP motif is present at residues 326-329 (PTPP). The segment covering 388–404 (ESSTLSSGISIGSSDGS) has biased composition (low complexity). One can recognise a PH domain in the interval 458–570 (AVTIQGVLRR…WFKHLSAACQ (113 aa)).

Its subcellular location is the cytoplasm. The protein localises to the cell membrane. Functionally, guanine nucleotide exchange factor. May be involved in cytoskeletal organization. In Gallus gallus (Chicken), this protein is Ras-specific guanine nucleotide-releasing factor RalGPS1 (RALGPS1).